A 61-amino-acid polypeptide reads, in one-letter code: Small ribosomal subunit protein uS14 (61 aa).

Residues cysteine 24, cysteine 27, cysteine 40, and cysteine 43 each coordinate Zn(2+).

This sequence belongs to the universal ribosomal protein uS14 family. Zinc-binding uS14 subfamily. As to quaternary structure, part of the 30S ribosomal subunit. Contacts proteins S3 and S10. Zn(2+) serves as cofactor.

Its function is as follows. Binds 16S rRNA, required for the assembly of 30S particles and may also be responsible for determining the conformation of the 16S rRNA at the A site. The sequence is that of Small ribosomal subunit protein uS14 from Moorella thermoacetica (strain ATCC 39073 / JCM 9320).